The following is a 375-amino-acid chain: Heat shock protein 42 (375 aa).

Disordered stretches follow at residues 21–59 (TGQR…HPLY), 81–127 (SPEY…YYHC), 154–238 (PYEG…ETRM), and 347–375 (PKPK…TVEN). A compositionally biased stretch (low complexity) spans 22–48 (GQRGQQGYPRQPQRPQRYHPHYGQVHV). Positions 49 to 58 (GGHHPRHHPL) are enriched in basic residues. 2 stretches are compositionally biased toward acidic residues: residues 85-101 (GYDD…EDMV) and 158-168 (TEPEIEANTEQ). Positions 169 to 197 (EGEKGEEKDKKDKSEAPKEEAGETNKEKP) are enriched in basic and acidic residues. Phosphoserine occurs at positions 182, 213, 214, 215, and 223. One can recognise a sHSP domain in the interval 237-356 (RMDLPFSPEV…PKPKKRIAIE (120 aa)). Over residues 357–367 (EIPDEELEFEE) the composition is skewed to acidic residues.

This sequence belongs to the small heat shock protein (HSP20) family. As to quaternary structure, forms oligomeric complexes. Interacts with itself.

The chain is Heat shock protein 42 (HSP42) from Saccharomyces cerevisiae (strain ATCC 204508 / S288c) (Baker's yeast).